The sequence spans 254 residues: Alcohol dehydrogenase 2 (254 aa).

An NAD(+)-binding site is contributed by 10–33; sequence FVAGLGGIGLDTSREIVKSGPKNL. Ser138 serves as a coordination point for substrate. Residue Tyr151 is the Proton acceptor of the active site.

Belongs to the short-chain dehydrogenases/reductases (SDR) family. As to quaternary structure, homodimer.

The enzyme catalyses a primary alcohol + NAD(+) = an aldehyde + NADH + H(+). It carries out the reaction a secondary alcohol + NAD(+) = a ketone + NADH + H(+). The sequence is that of Alcohol dehydrogenase 2 (Adh2) from Drosophila montana (Fruit fly).